Consider the following 991-residue polypeptide: KAT8 regulatory NSL complex subunit 1-like protein (991 aa).

K136 participates in a covalent cross-link: Glycyl lysine isopeptide (Lys-Gly) (interchain with G-Cter in SUMO2). Residues 443–462 (VNSQVPQRSEEPLPEHDFEM) form a disordered region. A compositionally biased stretch (basic and acidic residues) spans 450–461 (RSEEPLPEHDFE). Residue S463 is modified to Phosphoserine. The span at 749 to 763 (ANVTSRTQNPSSQNT) shows a compositional bias: polar residues. The interval 749-770 (ANVTSRTQNPSSQNTSRRRLRS) is disordered. One can recognise a PEHE domain in the interval 798–919 (EILTPRWRKV…DGQEDKSLRW (122 aa)). An N6-acetyllysine modification is found at K863.

In terms of processing, acetylated on lysine residues by KAT8 upon ionizing radiation-induced DNA damage; deacetylated by HDAC3.

In Mus musculus (Mouse), this protein is KAT8 regulatory NSL complex subunit 1-like protein (Kansl1l).